We begin with the raw amino-acid sequence, 405 residues long: MTMKLPIYLDYSATTPVDPRVAEKMIPYLCEHFGNPASRSHSFGWVADAAVEEAREQVAALVNADPKEIVWTSGATESNNLAIKGAANFYASTKGKHIITVKTEHKAILDTVREMERQGFEATYLDVKEDGLLDLEVFKAAIRPDTVLASVMFVNNEVGVIQPIAELGEICREKGIIFHVDAAQATGKVDIDLSKLKVDLMSFCAHKTYGPKGIGALYVRRKPRIRLEAQMHGGGHERGFRSGTLPTHQIVGMGECFRLAKEEMAEENKRVGALRDKLLKGLQDIEATFVNGDLTQRVAHNLNISFAYVEGESMIMAIKDLAVSSGSACTSASLEPSYVLRALGRDDELAHSSIRFSIGRFTTEEEIDYAIKLLHQKVGKLRELSPLWEMYKDGIDLSTVQWAAH.

Asn156 provides a ligand contact to pyridoxal 5'-phosphate. Lys207 carries the N6-(pyridoxal phosphate)lysine modification. Catalysis depends on Cys329, which acts as the Cysteine persulfide intermediate. Residue Cys329 coordinates [2Fe-2S] cluster.

It belongs to the class-V pyridoxal-phosphate-dependent aminotransferase family. NifS/IscS subfamily. In terms of assembly, homodimer. Forms a heterotetramer with IscU, interacts with other sulfur acceptors. Pyridoxal 5'-phosphate serves as cofactor.

The protein resides in the cytoplasm. The enzyme catalyses (sulfur carrier)-H + L-cysteine = (sulfur carrier)-SH + L-alanine. Its pathway is cofactor biosynthesis; iron-sulfur cluster biosynthesis. In terms of biological role, master enzyme that delivers sulfur to a number of partners involved in Fe-S cluster assembly, tRNA modification or cofactor biosynthesis. Catalyzes the removal of elemental sulfur atoms from cysteine to produce alanine. Functions as a sulfur delivery protein for Fe-S cluster synthesis onto IscU, an Fe-S scaffold assembly protein, as well as other S acceptor proteins. This is Cysteine desulfurase IscS from Dechloromonas aromatica (strain RCB).